The chain runs to 250 residues: ATP synthase subunit a (250 aa).

6 helical membrane-spanning segments follow: residues 31–51, 85–105, 115–135, 144–164, 194–214, and 217–237; these read SAYM…GMAG, FFPL…IGII, LIVT…YGLY, LFVP…IEVI, FVGM…LPLG, and VAVT…FTIL.

This sequence belongs to the ATPase A chain family. In terms of assembly, F-type ATPases have 2 components, CF(1) - the catalytic core - and CF(0) - the membrane proton channel. CF(1) has five subunits: alpha(3), beta(3), gamma(1), delta(1), epsilon(1). CF(0) has four main subunits: a, b, b' and c.

Its subcellular location is the cell inner membrane. Functionally, key component of the proton channel; it plays a direct role in the translocation of protons across the membrane. This Rhodopseudomonas palustris (strain BisB5) protein is ATP synthase subunit a.